The chain runs to 56 residues: Large ribosomal subunit protein bL32 (56 aa).

Residues 1–37 are disordered; it reads MAVQQNKKSRSKRGMRRSHDALSTAQLSVDATSGELH. A compositionally biased stretch (basic residues) spans 7–16; sequence KKSRSKRGMR. The span at 21-31 shows a compositional bias: polar residues; it reads ALSTAQLSVDA.

This sequence belongs to the bacterial ribosomal protein bL32 family.

The polypeptide is Large ribosomal subunit protein bL32 (Shewanella loihica (strain ATCC BAA-1088 / PV-4)).